Consider the following 461-residue polypeptide: V-type ATP synthase beta chain (461 aa).

The protein belongs to the ATPase alpha/beta chains family.

In terms of biological role, produces ATP from ADP in the presence of a proton gradient across the membrane. The V-type beta chain is a regulatory subunit. The protein is V-type ATP synthase beta chain of Clostridium botulinum (strain ATCC 19397 / Type A).